The sequence spans 900 residues: Protein translocase subunit SecA (900 aa).

ATP-binding positions include Q87, G105–T109, and D512. The span at Q842–A852 shows a compositional bias: basic and acidic residues. The tract at residues Q842–K900 is disordered. Zn(2+)-binding residues include C883, C885, C894, and H895. The segment covering K889–K900 has biased composition (basic residues).

Belongs to the SecA family. Monomer and homodimer. Part of the essential Sec protein translocation apparatus which comprises SecA, SecYEG and auxiliary proteins SecDF-YajC and YidC. Zn(2+) is required as a cofactor.

It is found in the cell inner membrane. The protein localises to the cytoplasm. It catalyses the reaction ATP + H2O + cellular proteinSide 1 = ADP + phosphate + cellular proteinSide 2.. Functionally, part of the Sec protein translocase complex. Interacts with the SecYEG preprotein conducting channel. Has a central role in coupling the hydrolysis of ATP to the transfer of proteins into and across the cell membrane, serving both as a receptor for the preprotein-SecB complex and as an ATP-driven molecular motor driving the stepwise translocation of polypeptide chains across the membrane. The protein is Protein translocase subunit SecA of Pectobacterium carotovorum subsp. carotovorum (strain PC1).